Here is a 710-residue protein sequence, read N- to C-terminus: MKTWKREILGREFIVEHGKVAKQANGAVVARIGDTTVLATAVMSDSAVEGIDFVPLTVEFQERFYAAGKIPGGFIKREGKPSEMAILSARTIDRPIRPLFPKHLRNEVQVVVTVISTDSVNTPDIVGVFAASLALNISDIPFNGIVAAVRVGLVDGKIVLFPTEDQLQKSLLDIVVAGTEDTITMVEGEAKEVSESQMLQALLKAHDAIKQIIDFEKEILSYFNIEKAQIAEKTLPEEIEKEFSQLLDGNELRERLLIQGKKARSNALSEYFKKIYEILEARYGTEKIEELSVLLKDKYEEALKYKMRRIIVEEGTRLDMRKPKDIRPITCETGLLPRVHGSALFTRGETQSLGIVTLGAPMDEQIIDSLLEEGTKRFMLHYNFPPFSTGEVKPLRGPSRREIGHGHLAERALKFVLPDEDRFPYTIRIVSEILESNGSSSMATVCSGSLALMDAGVPISKHVAGVAMGLILEKDSQIVLTDILGAEDHWGDMDFKVAGTRDGITAFQMDCKVSGVSADLLERALNQAKEARLYVLEKLYETISKPRDTLSKYAPVIKVISIDPSKVAEIIGPGGKIIKALIKDYDVKISVDDLTGKVSVIGGNEEKVDAAIEQINSILKEISVGDVFSGKVTRIEPFGVFVEISPGKVGLLHQSKLITDLKTVKIGETMRVKVSNIDNLGRLQLEEFSDSPDHKHGEKRSFKRHRKNDN.

Mg(2+)-binding residues include D488 and D494. Positions 555–615 (PVIKVISIDP…EKVDAAIEQI (61 aa)) constitute a KH domain. An S1 motif domain is found at 625 to 688 (GDVFSGKVTR…NLGRLQLEEF (64 aa)). The disordered stretch occupies residues 688-710 (FSDSPDHKHGEKRSFKRHRKNDN). Positions 691–700 (SPDHKHGEKR) are enriched in basic and acidic residues. Over residues 701–710 (SFKRHRKNDN) the composition is skewed to basic residues.

This sequence belongs to the polyribonucleotide nucleotidyltransferase family. It depends on Mg(2+) as a cofactor.

It is found in the cytoplasm. The enzyme catalyses RNA(n+1) + phosphate = RNA(n) + a ribonucleoside 5'-diphosphate. Functionally, involved in mRNA degradation. Catalyzes the phosphorolysis of single-stranded polyribonucleotides processively in the 3'- to 5'-direction. In Pseudothermotoga lettingae (strain ATCC BAA-301 / DSM 14385 / NBRC 107922 / TMO) (Thermotoga lettingae), this protein is Polyribonucleotide nucleotidyltransferase.